The sequence spans 481 residues: ATP synthase subunit beta, chloroplastic (481 aa).

Position 162-169 (162-169) interacts with ATP; that stretch reads GGAGVGKT.

It belongs to the ATPase alpha/beta chains family. F-type ATPases have 2 components, F(1) - the catalytic core - and F(0) - the membrane proton channel. F(1) has five subunits: alpha(3), beta(3), gamma(1), delta(1), epsilon(1). F(0) has four main subunits: a(1), b(1), b'(1) and c(10-14). The alpha and beta chains form an alternating ring which encloses part of the gamma chain. F(1) is attached to F(0) by a central stalk formed by the gamma and epsilon chains, while a peripheral stalk is formed by the delta, b and b' chains.

Its subcellular location is the plastid. The protein localises to the chloroplast thylakoid membrane. It carries out the reaction ATP + H2O + 4 H(+)(in) = ADP + phosphate + 5 H(+)(out). Functionally, f(1)F(0) ATP synthase produces ATP from ADP in the presence of a proton or sodium gradient. F-type ATPases consist of two structural domains, F(1) containing the extramembraneous catalytic core and F(0) containing the membrane proton channel, linked together by a central stalk and a peripheral stalk. During catalysis, ATP synthesis in the catalytic domain of F(1) is coupled via a rotary mechanism of the central stalk subunits to proton translocation. In terms of biological role, produces ATP from ADP in the presence of a proton gradient across the membrane. The catalytic sites are hosted primarily by the beta subunits. This is ATP synthase subunit beta, chloroplastic from Chlamydomonas reinhardtii (Chlamydomonas smithii).